The sequence spans 52 residues: Venom peptide 4a (52 aa).

The N-terminal stretch at 1 to 23 (MRSAILLVIVAIVAILGFLGVNA) is a signal peptide. AXPX repeat units lie at residues 23–26 (AEPL), 31–34 (AEPN), and 39–42 (AAPL). Positions 24-41 (EPLPSPLAEPNPHAKAAP) are excised as a propeptide. An Alanine amide modification is found at Ala51.

Expressed by the venom gland.

Its subcellular location is the secreted. In Eumenes pomiformis (Potter wasp), this protein is Venom peptide 4a.